The sequence spans 267 residues: Cell division protein FtsQ (267 aa).

Over 1–32 (MRQKTISNKNKQTKNTNNISLRRKLGLMYKKA) the chain is Cytoplasmic. Residues 33–53 (ILVLKIVLMIFVCLFVFTKYF) form a helical membrane-spanning segment. Residues 54 to 267 (TSIKTYLITN…DRNKYYIQKY (214 aa)) lie on the Periplasmic side of the membrane. The POTRA domain occupies 73–141 (FRLENVIIEG…NTVYIKLFER (69 aa)).

The protein belongs to the FtsQ/DivIB family. FtsQ subfamily.

It is found in the cell inner membrane. Functionally, essential cell division protein. The polypeptide is Cell division protein FtsQ (Rickettsia prowazekii (strain Madrid E)).